The primary structure comprises 306 residues: Mitochondrial basic amino acids transporter (306 aa).

6 consecutive transmembrane segments (helical) span residues 2 to 22 (ALDF…GHPF), 61 to 81 (GLGS…GVQG), 96 to 116 (FLAG…MELA), 153 to 172 (GMVS…FLTY), 187 to 207 (LLVP…WLST), and 255 to 275 (LLRA…VLTY). Solcar repeat units lie at residues 2–86 (ALDF…TLRA), 90–178 (DSPL…LTRA), and 190–275 (PKLL…VLTY). The segment at 283-306 (VDSEAAPGASTTPAGPALAQPSSL) is disordered. Positions 287-306 (AAPGASTTPAGPALAQPSSL) are enriched in low complexity.

The protein belongs to the mitochondrial carrier (TC 2.A.29) family.

The protein localises to the mitochondrion inner membrane. The enzyme catalyses L-lysine(out) + L-arginine(in) = L-lysine(in) + L-arginine(out). It catalyses the reaction L-histidine(out) + L-arginine(in) = L-histidine(in) + L-arginine(out). The catalysed reaction is L-ornithine(in) + L-arginine(out) = L-ornithine(out) + L-arginine(in). It carries out the reaction L-homoarginine(in) + L-arginine(out) = L-homoarginine(out) + L-arginine(in). The enzyme catalyses N(omega)-methyl-L-arginine(in) + L-arginine(out) = N(omega)-methyl-L-arginine(out) + L-arginine(in). It catalyses the reaction L-arginine(in) = L-arginine(out). The catalysed reaction is L-lysine(in) = L-lysine(out). It carries out the reaction L-ornithine(in) = L-ornithine(out). The enzyme catalyses L-histidine(out) = L-histidine(in). In terms of biological role, mitochondrial transporter of arginine, lysine, homoarginine, methylarginine and, to a much lesser extent, ornithine and histidine. Does not transport carnitine nor acylcarnitines. Functions by both counter-exchange and uniport mechanisms. Plays a physiological role in the import of basic amino acids into mitochondria for mitochondrial protein synthesis and amino acid degradation. The chain is Mitochondrial basic amino acids transporter (Slc25a29) from Rattus norvegicus (Rat).